The sequence spans 179 residues: ATP-dependent protease subunit HslV (179 aa).

The active site involves Thr-6. Na(+)-binding residues include Ser-164, Cys-167, and Thr-170.

This sequence belongs to the peptidase T1B family. HslV subfamily. A double ring-shaped homohexamer of HslV is capped on each side by a ring-shaped HslU homohexamer. The assembly of the HslU/HslV complex is dependent on binding of ATP.

It localises to the cytoplasm. It carries out the reaction ATP-dependent cleavage of peptide bonds with broad specificity.. With respect to regulation, allosterically activated by HslU binding. In terms of biological role, protease subunit of a proteasome-like degradation complex believed to be a general protein degrading machinery. This chain is ATP-dependent protease subunit HslV, found in Listeria innocua serovar 6a (strain ATCC BAA-680 / CLIP 11262).